The primary structure comprises 293 residues: Protein BOBBER 2 (293 aa).

Ala-2 carries the post-translational modification N-acetylalanine. The stretch at 50–80 forms a coiled coil; it reads EKEIVAAVMAAKQRLREAEKKKLEKESVKSM. 2 stretches are compositionally biased toward basic and acidic residues: residues 67–102 and 110–120; these read AEKKKLEKESVKSMEVEKPKKDSLKPTELEKPKEES and EIEKPKEEKES. The disordered stretch occupies residues 67–125; the sequence is AEKKKLEKESVKSMEVEKPKKDSLKPTELEKPKEESLMATDPMEIEKPKEEKESGPIVP. Residues 131-220 form the CS domain; the sequence is LDFEKYSWGQ…DQMEWWKYCV (90 aa).

The protein localises to the cytoplasm. Its subcellular location is the cytoplasmic granule. Small heat shock protein required for the establishment of auxin gradients and for patterning of the apical domain of the embryo. Involved in the specification of the cotyledon primordia. Also required for normal inflorescence and floral meristem function, normal developmental patterning and thermotolerance. Acts as a molecular chaperone. In Arabidopsis thaliana (Mouse-ear cress), this protein is Protein BOBBER 2 (BOB2).